The chain runs to 404 residues: Acetate kinase (404 aa).

A Mg(2+)-binding site is contributed by N7. Residue K14 coordinates ATP. Residue R98 coordinates substrate. D155 (proton donor/acceptor) is an active-site residue. Residues 214-218, 289-291, and 337-341 contribute to the ATP site; these read HLGNG, DLR, and GIGEN. A Mg(2+)-binding site is contributed by E390.

The protein belongs to the acetokinase family. As to quaternary structure, homodimer. It depends on Mg(2+) as a cofactor. Requires Mn(2+) as cofactor.

The protein resides in the cytoplasm. The enzyme catalyses acetate + ATP = acetyl phosphate + ADP. Its pathway is metabolic intermediate biosynthesis; acetyl-CoA biosynthesis; acetyl-CoA from acetate: step 1/2. Its function is as follows. Catalyzes the formation of acetyl phosphate from acetate and ATP. Can also catalyze the reverse reaction. This is Acetate kinase from Rippkaea orientalis (strain PCC 8801 / RF-1) (Cyanothece sp. (strain PCC 8801)).